The following is a 270-amino-acid chain: Bacterial microcompartment shell protein PduB (270 aa).

BMC circularly permuted domains lie at 47-152 and 154-262; these read EFVG…DRTF and DVYA…GSEP.

This sequence belongs to the EutL/PduB family. As to quaternary structure, homotrimerizes to form a pseudohexamer with a central pore. The trimers pack into an array. Both forms interact with shell protein PduA. In purified BMCs seen as a 30.0 kDa and 25.0 kDa form; the smaller form is called PduB'.

The protein resides in the bacterial microcompartment. Its pathway is polyol metabolism; 1,2-propanediol degradation. Its function is as follows. The two proteins produced are among the major shell proteins of the bacterial microcompartment (BMC) shell dedicated to 1,2-propanediol (1,2-PD) degradation. Overexpression of the gene gives large amorphous intracellular structures; when only PduB is overexpressed large circular bodies are observed which contain concentric rings, whereas with PduB' overexpression internal bodies with regular straight-lined structures were generated. The N-terminus of the long form (PduB) is required for correct formation of BMCs. May play a major role in binding the enzyme contents to the shell. In terms of biological role, expression of a cosmid containing the full 21-gene pdu operon in E.coli allows E.coli to grow on 1,2-propanediol (1,2-PD) with the appearance of BMCs in its cytoplasm. Functionally, the 1,2-PD-specific bacterial microcompartment (BMC) concentrates low levels of 1,2-PD catabolic enzymes, concentrates volatile reaction intermediates thus enhancing pathway flux and keeps the level of toxic, mutagenic propionaldehyde low. This chain is Bacterial microcompartment shell protein PduB, found in Citrobacter freundii.